A 400-amino-acid chain; its full sequence is ATP-dependent RNA helicase Ddx1 (400 aa).

The Helicase ATP-binding domain occupies 1–60 (DDEADRLLKQGYTDLIERLHKQIPKITSDGCRLQMIVCSATLHAFEVKKMAERLMHFPTW). Residues 2–5 (DEAD) carry the DEAD box motif. The Helicase C-terminal domain maps to 115 to 316 (TFSQAVKLLK…QVVKSLDVPV (202 aa)).

Belongs to the DEAD box helicase family. DDX1 subfamily.

The enzyme catalyses ATP + H2O = ADP + phosphate + H(+). Functionally, acts as an ATP-dependent RNA helicase, able to unwind both RNA-RNA and RNA-DNA duplexes. Possesses 5' single-stranded RNA overhang nuclease activity. In Drosophila virilis (Fruit fly), this protein is ATP-dependent RNA helicase Ddx1 (Ddx1).